The primary structure comprises 161 residues: Nucleotide-binding protein BceJ2315_27070 (161 aa).

This sequence belongs to the YajQ family.

Its function is as follows. Nucleotide-binding protein. The protein is Nucleotide-binding protein BceJ2315_27070 of Burkholderia cenocepacia (strain ATCC BAA-245 / DSM 16553 / LMG 16656 / NCTC 13227 / J2315 / CF5610) (Burkholderia cepacia (strain J2315)).